The following is a 595-amino-acid chain: Putative laccase-18 (595 aa).

The first 29 residues, 1 to 29 (MEKLSTAASLFGVVVAATALAMAVVGGEA), serve as a signal peptide directing secretion. 2 consecutive Plastocyanin-like domains span residues 37–153 (MVHE…PRDG) and 162–316 (KDVP…YTGA). 2 N-linked (GlcNAc...) asparagine glycosylation sites follow: Asn42 and Asn48. Residues His87 and His89 each contribute to the Cu cation site. N-linked (GlcNAc...) asparagine glycosylation is present at Asn121. Residues His132 and His134 each coordinate Cu cation. 7 N-linked (GlcNAc...) asparagine glycosylation sites follow: Asn206, Asn345, Asn382, Asn402, Asn409, Asn439, and Asn470. In terms of domain architecture, Plastocyanin-like 3 spans 429 to 571 (DFPVRPPRPF…ATAFIVEDGP (143 aa)). Residues Asn488, His491, His493, His550, Cys551, His552, His556, and Met561 each coordinate Cu cation. The disordered stretch occupies residues 570–595 (GPTPETSLPPPPPEFKRCGTNGLSQP).

The protein belongs to the multicopper oxidase family. Requires Cu cation as cofactor.

The protein localises to the secreted. It localises to the extracellular space. It is found in the apoplast. The enzyme catalyses 4 hydroquinone + O2 = 4 benzosemiquinone + 2 H2O. In terms of biological role, lignin degradation and detoxification of lignin-derived products. This Oryza sativa subsp. indica (Rice) protein is Putative laccase-18 (LAC18).